The primary structure comprises 426 residues: MSKDEELLQNYCSILFTYKTIGISNLHLYYFRETEIKSLKQLINAEFAILQTCNRVEIYLYSDTNTLKEVNKIIQYLNNIHNEPIGNQARVLCGKDAAKHLFLVASGADSLSIGEYEILSQIRSTIDMFKKLGFSGKYLQIFFERAIKVGRKVREETSISKGKVGIYSLAIDEAKKRFNDFYDRRILVIGAGEMAQKITSMLHNEGAKDVTIMNRTIEKAKQLALKFGYNYEKLDLDKLGNFDVAFISIYHENLRLENKWNTLIVDITVPPLFTGNNVITLEELERISNLNFKAREEELAKINKLVEDGINELLYDYKKEIYTEFMSKIMKRIETIRENEILRAYKELEKLGINDQQAKEILDLMTRSIIKKSFQPLFDNIRSLIFNGENSINYINFLIDIFKDGNISGFETEKIKEKQVSERSSI.

Substrate contacts are provided by residues 52-55 (TCNR), Ser110, 115-117 (EYE), and Gln121. Cys53 (nucleophile) is an active-site residue. 190-195 (GAGEMA) is an NADP(+) binding site.

It belongs to the glutamyl-tRNA reductase family. In terms of assembly, homodimer.

It catalyses the reaction (S)-4-amino-5-oxopentanoate + tRNA(Glu) + NADP(+) = L-glutamyl-tRNA(Glu) + NADPH + H(+). The protein operates within porphyrin-containing compound metabolism; protoporphyrin-IX biosynthesis; 5-aminolevulinate from L-glutamyl-tRNA(Glu): step 1/2. Functionally, catalyzes the NADPH-dependent reduction of glutamyl-tRNA(Glu) to glutamate 1-semialdehyde (GSA). This is Glutamyl-tRNA reductase from Saccharolobus solfataricus (strain ATCC 35092 / DSM 1617 / JCM 11322 / P2) (Sulfolobus solfataricus).